A 443-amino-acid chain; its full sequence is Diels-Alderase poxQ (443 aa).

A signal peptide spans 1–23; the sequence is MARIPLEFLSITLPVLLLAYCLA. Residues N78, N97, and N145 are each glycosylated (N-linked (GlcNAc...) asparagine).

This sequence belongs to the Diels-Alderase family.

It participates in secondary metabolite biosynthesis. Functionally, diels-Alderase; part of the gene cluster that mediates the biosynthesis of oxaleimides, cytotoxic compounds containing an unusual disubstituted succinimide moiety. The first step of the pathway is provided by the HR-PKS poxF that serves in a new mode of collaborative biosynthesis with the PKS-NRPS poxE, by providing the olefin containing amino acid substrate via the synthesis of an ACP-bound dec-4-enoate. The cytochrome P450 monooxygenase poxM-catalyzed oxidation at the alpha-position creates the enzyme-bound 2-hydroxydec-4-enoyl-ACP thioester, which may be prone to spontaneous hydrolysis to yield 2-hydroxydec-4-enoic acid due to increased electrophilicity of the carbonyl. 2-hydroxydec-4-enoic acid can then be further oxidized by poxM to yield the alpha-ketoacid 2-oxodec-4-enoicacid, which is reductively aminated by the aminotransferase poxL to yield (S,E)-2-aminodec-4-enoic acid. The Hybrid PKS-NRPS synthetase poxE then performs condensation between the octaketide product of its PKS modules and the amino group of (S,E)-2-aminodec-4-enoic acid which is activated and incorporated by the adenylation domain. The resulting aminoacyl product can be cyclized by the Diels-Alderase PoxQ and reductively released by the reductive (R) domain of poxE to yield an aldehyde intermediate. The released aldehyde is then substrate for a Knoevenagel condensation by the hydrolyase poxO followed by an oxidation at the 5-position of the pyrrolidone ring. The presence of the olefin from the amino acid building block allows for migration of the substituted allyl group to occur. This allylic transposition reaction takes place in a conjugate addition, semipinacol-like fashion to yield a succinimide intermediate. Iterative two-electron oxidations of the C7 methyl of the succinimide intermediate to the carboxylic acid can be catalyzed by one of two remaining cytochrome P450 monooxygenasess poxC or poxD to yield oxaleimide A. Subsequent oxidation yields the maleimide scaffold oxaleimide I. Both oxaleimide A and oxaleimide I can undergo oxidative modifications in the decalin ring to yield the series of products oxaleimides B to H. The protein is Diels-Alderase poxQ of Penicillium oxalicum.